A 112-amino-acid polypeptide reads, in one-letter code: MTEYESAQKGALKLKGCGDMSLGKKKKKKNKANDQIMQEIITSKKNEEEKKKPSLDKRTPAQLAFEKMQEKRQMERILKKASKTHKQRVEDFNRHLDTLTEHYDIPKVSWTK.

The disordered stretch occupies residues Lys15–Gln35.

The protein belongs to the FAM32 family.

Its subcellular location is the nucleus. May induce G2 arrest and apoptosis. May also increase cell sensitivity to apoptotic stimuli. The protein is Protein FAM32A (fam32a) of Xenopus tropicalis (Western clawed frog).